Reading from the N-terminus, the 401-residue chain is Voltage-gated potassium channel subunit beta-3 (401 aa).

Composition is skewed to polar residues over residues 1 to 14 (MQVS…TLRS) and 32 to 41 (GVSMAQTKQR). Residues 1 to 49 (MQVSFACTEQTLRSRTSEDRLCPSRPSGGQNGVSMAQTKQRTPPMGAKN) are disordered. Residues Thr-90, Trp-91, Gln-97, and Asp-119 each coordinate NADP(+). Residue Tyr-124 is the Proton donor/acceptor of the active site. Positions 192, 222, 223, 248, 277, 278, 279, 280, 281, 282, 288, 298, 357, 359, 363, 366, and 367 each coordinate NADP(+).

It belongs to the shaker potassium channel beta subunit family. In terms of assembly, forms heteromultimeric complex with alpha subunits. Identified in potassium channel complexes containing KCNA1 and KCNA2.

The protein resides in the cytoplasm. In terms of biological role, regulatory subunit of the voltage-gated potassium (Kv) channels composed of pore-forming and potassium-conducting alpha subunits and of regulatory beta subunit. The beta-3/KCNAB3 subunit may mediate closure of potassium channels. Increases and accelerates inactivation of Kv1.1/KCNA1 and Kv2.2/KCNA2 subunit-containing channels. May display nicotinamide adenine dinucleotide phosphate (NADPH)-dependent aldoketoreductase activity. The binding of oxidized and reduced NADP(H) cofactors may be required for the regulation of potassium channel activity. The chain is Voltage-gated potassium channel subunit beta-3 (kcnab3) from Xenopus laevis (African clawed frog).